Here is a 203-residue protein sequence, read N- to C-terminus: MPHALPPLPYAYDALEPHIDALTMEIHHSKHHQTYVNNLNAALEGTPYAEQPVESLLRQLAGLPEKLRTPVVNNGGGHANHSLFWTVMSPQGGGRPDGDLGRAIDEQLGGFEAFKDAFTKAALTRFGSGWAWLSVTPQGSLLVESSGNQDSPLMNGNTPILGLDVWEHAYYLKYQNRRPEYIGAFYNVIDWREVARRYAQALA.

Mn(2+)-binding residues include H27, H81, D164, and H168.

The protein belongs to the iron/manganese superoxide dismutase family. In terms of assembly, homodimer. Requires Mn(2+) as cofactor.

The enzyme catalyses 2 superoxide + 2 H(+) = H2O2 + O2. Destroys superoxide anion radicals which are normally produced within the cells and which are toxic to biological systems. Partially complements double sodA-sodB deletions in E.coli. The polypeptide is Superoxide dismutase [Mn] (Pseudomonas aeruginosa (strain ATCC 15692 / DSM 22644 / CIP 104116 / JCM 14847 / LMG 12228 / 1C / PRS 101 / PAO1)).